The primary structure comprises 387 residues: Cyclin-J-like protein (387 aa).

In terms of domain architecture, Cyclin N-terminal spans D13–C142.

This sequence belongs to the cyclin family. Cyclin J subfamily.

This chain is Cyclin-J-like protein (Ccnjl), found in Mus musculus (Mouse).